The following is a 100-amino-acid chain: Urease subunit gamma (100 aa).

It belongs to the urease gamma subunit family. As to quaternary structure, heterotrimer of UreA (gamma), UreB (beta) and UreC (alpha) subunits. Three heterotrimers associate to form the active enzyme.

The protein resides in the cytoplasm. The catalysed reaction is urea + 2 H2O + H(+) = hydrogencarbonate + 2 NH4(+). The protein operates within nitrogen metabolism; urea degradation; CO(2) and NH(3) from urea (urease route): step 1/1. The sequence is that of Urease subunit gamma from Rhizobium etli (strain CIAT 652).